The chain runs to 287 residues: Viomycin phosphotransferase (287 aa).

Asp190 functions as the Proton acceptor in the catalytic mechanism.

Belongs to the aminoglycoside phosphotransferase family.

It carries out the reaction viomycin + ATP = O-phosphoviomycin + ADP + H(+). Functionally, the aminoglycoside phosphotransferases achieve inactivation of their antibiotic substrates by phosphorylation. This chain is Viomycin phosphotransferase (vph), found in Streptomyces vinaceus.